The primary structure comprises 697 residues: MARSHPLERYRNFGIMAHIDAGKTTTTERILYYTGKSYKIGEVHDGAATMDWMEQEQERGITITSAATTCLWKADEGKGPEHRLNIIDTPGHVDFTIEVERSLRVLDGAVAAFDGVAGVEPQSETVWRQADKYKVPRMCFINKLDRTGANFYYCVQTIIDRLGATPAVLYLPIGAESDFKGLVDLVNERAIIWKDESLGAEFFYEDIPADLADKAAEYREKLVELAVEQDDEAMEAYLEGNVPDVATLKKLIRKGTLNQAFVPVLCGSAFKNKGVQPLLDAVVDYLPSPLDIPDVQGINPTTEQPDSRATSDSAPLSMLAFKIMNDPFVGSLTFARIYSGTLTKGSYLNSVKDKKEKIGRMLLMHANSREDIEEAFAGDIVALAGLKETTTGDTLCASNAPIILERMEFPEPVIELSVEPKTKADQEKMGIALSRLAAEDPSFRVSTDHESGQTIIKGMGELHLDILVDRMKREFKVEANVGAPQVAYRESLAKPVDVDYTHKKQSGGSGQFGRVKVSVAPGERGSGITFIDEIKGGNIPREYIPSVEKGMREAAENGHMIGFPIIDFEIRLTDGAYHDVDSSALAFEIAGRAAMREVAAKAGIKLLEPVMKVEVVTPEEFMGDVIGDLNSRRGQIQGTDSRGNAQVVEAMVPLANMFGYVNQLRSFTQGRAQYTMQFSHYEEVPNNVAEEVKAKMA.

The region spanning Glu-8–Leu-290 is the tr-type G domain. Residues Ala-17–Thr-24, Asp-88–His-92, and Asn-142–Asp-145 each bind GTP.

This sequence belongs to the TRAFAC class translation factor GTPase superfamily. Classic translation factor GTPase family. EF-G/EF-2 subfamily.

The protein localises to the cytoplasm. Catalyzes the GTP-dependent ribosomal translocation step during translation elongation. During this step, the ribosome changes from the pre-translocational (PRE) to the post-translocational (POST) state as the newly formed A-site-bound peptidyl-tRNA and P-site-bound deacylated tRNA move to the P and E sites, respectively. Catalyzes the coordinated movement of the two tRNA molecules, the mRNA and conformational changes in the ribosome. The sequence is that of Elongation factor G from Sphingopyxis alaskensis (strain DSM 13593 / LMG 18877 / RB2256) (Sphingomonas alaskensis).